We begin with the raw amino-acid sequence, 625 residues long: 1-deoxy-D-xylulose-5-phosphate synthase (625 aa).

Residues H84 and 125–127 (GHS) each bind thiamine diphosphate. D156 is a binding site for Mg(2+). Thiamine diphosphate is bound by residues 157–158 (GA), N185, F292, and E373. N185 lines the Mg(2+) pocket.

This sequence belongs to the transketolase family. DXPS subfamily. As to quaternary structure, homodimer. The cofactor is Mg(2+). It depends on thiamine diphosphate as a cofactor.

It carries out the reaction D-glyceraldehyde 3-phosphate + pyruvate + H(+) = 1-deoxy-D-xylulose 5-phosphate + CO2. It participates in metabolic intermediate biosynthesis; 1-deoxy-D-xylulose 5-phosphate biosynthesis; 1-deoxy-D-xylulose 5-phosphate from D-glyceraldehyde 3-phosphate and pyruvate: step 1/1. Catalyzes the acyloin condensation reaction between C atoms 2 and 3 of pyruvate and glyceraldehyde 3-phosphate to yield 1-deoxy-D-xylulose-5-phosphate (DXP). The protein is 1-deoxy-D-xylulose-5-phosphate synthase of Marinomonas sp. (strain MWYL1).